The chain runs to 402 residues: Acetylornithine aminotransferase (402 aa).

Pyridoxal 5'-phosphate-binding positions include Gly117–Ala118 and Phe143. Position 146 (Arg146) interacts with N(2)-acetyl-L-ornithine. Asp231–Gln234 is a binding site for pyridoxal 5'-phosphate. The residue at position 260 (Lys260) is an N6-(pyridoxal phosphate)lysine. Thr288 provides a ligand contact to N(2)-acetyl-L-ornithine. Position 289 (Thr289) interacts with pyridoxal 5'-phosphate.

The protein belongs to the class-III pyridoxal-phosphate-dependent aminotransferase family. ArgD subfamily. As to quaternary structure, homodimer. Pyridoxal 5'-phosphate serves as cofactor.

The protein localises to the cytoplasm. The catalysed reaction is N(2)-acetyl-L-ornithine + 2-oxoglutarate = N-acetyl-L-glutamate 5-semialdehyde + L-glutamate. It functions in the pathway amino-acid biosynthesis; L-arginine biosynthesis; N(2)-acetyl-L-ornithine from L-glutamate: step 4/4. In Corynebacterium efficiens (strain DSM 44549 / YS-314 / AJ 12310 / JCM 11189 / NBRC 100395), this protein is Acetylornithine aminotransferase.